The following is a 201-amino-acid chain: Small ribosomal subunit protein uS4c (201 aa).

The disordered stretch occupies residues 13–43 (RRLGDLPGLSRKAIKRPYPPGEHGQKPRKPS). Residues 90–154 (MRLDNTIFRL…SKQLVESYLA (65 aa)) form the S4 RNA-binding domain.

This sequence belongs to the universal ribosomal protein uS4 family. In terms of assembly, part of the 30S ribosomal subunit. Contacts protein S5. The interaction surface between S4 and S5 is involved in control of translational fidelity.

Its subcellular location is the plastid. It is found in the chloroplast. In terms of biological role, one of the primary rRNA binding proteins, it binds directly to 16S rRNA where it nucleates assembly of the body of the 30S subunit. Functionally, with S5 and S12 plays an important role in translational accuracy. The chain is Small ribosomal subunit protein uS4c (rps4) from Porphyra purpurea (Red seaweed).